A 156-amino-acid chain; its full sequence is Sec-independent protein translocase protein TatB (156 aa).

Residues 2–22 (FSSVGWGEIFLLVVVGLVVIG) traverse the membrane as a helical segment. The disordered stretch occupies residues 100–156 (KIMAEGTEGEAQRNKQAADNNANVVERPADGSTARPTQNDPKDGPNYSGGVSWTDII). Residues 113–122 (NKQAADNNAN) are compositionally biased toward polar residues.

This sequence belongs to the TatB family. In terms of assembly, the Tat system comprises two distinct complexes: a TatABC complex, containing multiple copies of TatA, TatB and TatC subunits, and a separate TatA complex, containing only TatA subunits. Substrates initially bind to the TatABC complex, which probably triggers association of the separate TatA complex to form the active translocon.

It localises to the cell membrane. Its function is as follows. Part of the twin-arginine translocation (Tat) system that transports large folded proteins containing a characteristic twin-arginine motif in their signal peptide across membranes. Together with TatC, TatB is part of a receptor directly interacting with Tat signal peptides. TatB may form an oligomeric binding site that transiently accommodates folded Tat precursor proteins before their translocation. The chain is Sec-independent protein translocase protein TatB from Corynebacterium glutamicum (strain ATCC 13032 / DSM 20300 / JCM 1318 / BCRC 11384 / CCUG 27702 / LMG 3730 / NBRC 12168 / NCIMB 10025 / NRRL B-2784 / 534).